The following is a 256-amino-acid chain: Type III pantothenate kinase (256 aa).

6-13 (DCGNTNTV) lines the ATP pocket. 107 to 110 (GPDR) is a substrate binding site. The active-site Proton acceptor is Asp-109. Asp-129 lines the K(+) pocket. Thr-132 serves as a coordination point for ATP. A substrate-binding site is contributed by Thr-184.

This sequence belongs to the type III pantothenate kinase family. As to quaternary structure, homodimer. The cofactor is NH4(+). Requires K(+) as cofactor.

The protein resides in the cytoplasm. It catalyses the reaction (R)-pantothenate + ATP = (R)-4'-phosphopantothenate + ADP + H(+). The protein operates within cofactor biosynthesis; coenzyme A biosynthesis; CoA from (R)-pantothenate: step 1/5. Functionally, catalyzes the phosphorylation of pantothenate (Pan), the first step in CoA biosynthesis. In Dinoroseobacter shibae (strain DSM 16493 / NCIMB 14021 / DFL 12), this protein is Type III pantothenate kinase.